The following is a 355-amino-acid chain: Ribosomal RNA large subunit methyltransferase M (355 aa).

S-adenosyl-L-methionine-binding positions include Ser191, 224-227, Asp243, Asp263, and Asp279; that span reads APGG. Lys308 acts as the Proton acceptor in catalysis.

This sequence belongs to the class I-like SAM-binding methyltransferase superfamily. RNA methyltransferase RlmE family. RlmM subfamily. In terms of assembly, monomer.

Its subcellular location is the cytoplasm. The catalysed reaction is cytidine(2498) in 23S rRNA + S-adenosyl-L-methionine = 2'-O-methylcytidine(2498) in 23S rRNA + S-adenosyl-L-homocysteine + H(+). Catalyzes the 2'-O-methylation at nucleotide C2498 in 23S rRNA. This Stenotrophomonas maltophilia (strain R551-3) protein is Ribosomal RNA large subunit methyltransferase M.